We begin with the raw amino-acid sequence, 93 residues long: Small ribosomal subunit protein uS19 (93 aa).

Belongs to the universal ribosomal protein uS19 family.

Its function is as follows. Protein S19 forms a complex with S13 that binds strongly to the 16S ribosomal RNA. This chain is Small ribosomal subunit protein uS19, found in Paenarthrobacter aurescens (strain TC1).